The sequence spans 425 residues: Protein upregulated in glial subsets pugs-5 (425 aa).

Basic and acidic residues predominate over residues 355–373; that stretch reads NNNDVEKSTQIEKKPEKQG. Positions 355–407 are disordered; it reads NNNDVEKSTQIEKKPEKQGPEIQEEVVEMETVKDEQPPKTSAVRFKENSPRLM.

This Caenorhabditis elegans protein is Protein upregulated in glial subsets pugs-5.